The sequence spans 355 residues: Histidinol-phosphate aminotransferase (355 aa).

An N6-(pyridoxal phosphate)lysine modification is found at Lys218.

It belongs to the class-II pyridoxal-phosphate-dependent aminotransferase family. Histidinol-phosphate aminotransferase subfamily. In terms of assembly, homodimer. It depends on pyridoxal 5'-phosphate as a cofactor.

The enzyme catalyses L-histidinol phosphate + 2-oxoglutarate = 3-(imidazol-4-yl)-2-oxopropyl phosphate + L-glutamate. Its pathway is amino-acid biosynthesis; L-histidine biosynthesis; L-histidine from 5-phospho-alpha-D-ribose 1-diphosphate: step 7/9. This Chlorobaculum parvum (strain DSM 263 / NCIMB 8327) (Chlorobium vibrioforme subsp. thiosulfatophilum) protein is Histidinol-phosphate aminotransferase.